The sequence spans 700 residues: Centrosomal protein of 63 kDa (700 aa).

N-acetylmethionine is present on methionine 1. Coiled-coil stretches lie at residues 73–283 (KEVG…ETFI) and 343–533 (LQAE…MCKK). Residues serine 278, lysine 488, and leucine 492 each carry the phosphoserine modification. A disordered region spans residues 570 to 603 (QYKTGHHSPRGQTLDSIDPVARGPSPLSSHISPG). Low complexity predominate over residues 593 to 603 (PSPLSSHISPG).

This sequence belongs to the CEP63 family. In terms of assembly, interacts with CEP152 and CDK1; these interactions recruit both ligands to centrosomes. Interacts with CDK2, CDK5RAP2, WDR62, CEP90, KIAA0753/moonraker and CCDC14. CEP63, CDK5RAP2, CEP152, WDR62 are proposed to form a stepwise assembled complex at the centrosome forming a ring near parental centrioles. Interacts with CCDC57; the interaction is required for their location to proximal end of centrioles. Interacts with FXR1; promoting its stabilization. Polyubiquitinated via 'Lys-48'-linked ubiquitin, leading to its degradation. Deubiquitinated by USP36, promoting its stabilization.

The protein localises to the cytoplasm. The protein resides in the cytoskeleton. It is found in the microtubule organizing center. It localises to the centrosome. Its subcellular location is the centriole. The protein localises to the centriolar satellite. Functionally, required for normal spindle assembly. Plays a key role in mother-centriole-dependent centriole duplication; the function also seems to involve CEP152, CDK5RAP2 and WDR62 through a stepwise assembled complex at the centrosome that recruits CDK2 required for centriole duplication. Reported to be required for centrosomal recruitment of CEP152; however, this function has been questioned. Also recruits CDK1 to centrosomes. Plays a role in DNA damage response. Following DNA damage, such as double-strand breaks (DSBs), is removed from centrosomes; this leads to the inactivation of spindle assembly and delay in mitotic progression. Promotes stabilization of FXR1 protein by inhibiting FXR1 ubiquitination. The protein is Centrosomal protein of 63 kDa of Mus musculus (Mouse).